Here is a 398-residue protein sequence, read N- to C-terminus: NADH-ubiquinone oxidoreductase 49 kDa subunit (398 aa).

The protein belongs to the complex I 49 kDa subunit family.

The protein resides in the mitochondrion. The catalysed reaction is a ubiquinone + NADH + 5 H(+)(in) = a ubiquinol + NAD(+) + 4 H(+)(out). Its function is as follows. Core subunit of the mitochondrial membrane respiratory chain NADH dehydrogenase (Complex I) that is believed to belong to the minimal assembly required for catalysis. Complex I functions in the transfer of electrons from NADH to the respiratory chain. The immediate electron acceptor for the enzyme is believed to be ubiquinone. Component of the iron-sulfur (IP) fragment of the enzyme. Component of the iron-sulfur (IP) fragment of the enzyme. The chain is NADH-ubiquinone oxidoreductase 49 kDa subunit (NAD7) from Cafeteria roenbergensis (Marine flagellate).